Reading from the N-terminus, the 216-residue chain is Probable GTP-binding protein EngB (216 aa).

An EngB-type G domain is found at 26-210 (PMATIIFAGR…KNRIFEVIRE (185 aa)). Residues 34–41 (GRSNVGKS), 59–63 (GVTRK), 76–79 (DMPG), 156–159 (NKLD), and 189–191 (ISA) each bind GTP. Residues Ser-41 and Thr-61 each coordinate Mg(2+).

This sequence belongs to the TRAFAC class TrmE-Era-EngA-EngB-Septin-like GTPase superfamily. EngB GTPase family. It depends on Mg(2+) as a cofactor.

Functionally, necessary for normal cell division and for the maintenance of normal septation. This is Probable GTP-binding protein EngB from Pyrococcus horikoshii (strain ATCC 700860 / DSM 12428 / JCM 9974 / NBRC 100139 / OT-3).